The chain runs to 152 residues: Urease accessory protein UreE (152 aa).

This sequence belongs to the UreE family.

The protein localises to the cytoplasm. Its function is as follows. Involved in urease metallocenter assembly. Binds nickel. Probably functions as a nickel donor during metallocenter assembly. In Citrobacter koseri (strain ATCC BAA-895 / CDC 4225-83 / SGSC4696), this protein is Urease accessory protein UreE.